The following is a 690-amino-acid chain: Protein arginine N-methyltransferase 7 (690 aa).

2 SAM-dependent MTase PRMT-type domains span residues 14-357 (QNSW…YSLW) and 366-690 (TKSV…QKKL).

Belongs to the class I-like SAM-binding methyltransferase superfamily. Protein arginine N-methyltransferase family. PRMT7 subfamily.

Functionally, essential arginine methyltransferase that can both catalyze the formation of omega-N monomethylarginine (MMA) and symmetrical dimethylarginine (sDMA). Specifically mediates the symmetrical dimethylation of arginine residues in the small nuclear ribonucleoproteins SmD1 and SmD3. This Drosophila erecta (Fruit fly) protein is Protein arginine N-methyltransferase 7 (Art7).